Reading from the N-terminus, the 101-residue chain is MENNNFRDSVLAILVCQFIGPNVFIIIGSIGSVIGVKIMEMYPHYCENHGIYIDKTSVGIAHGIYGIILGFIGIYVFLFVLLFILSIIFSIIYVISKRLSS.

The next 2 helical transmembrane spans lie at 10–30 (VLAILVCQFIGPNVFIIIGSI) and 67–87 (IILGFIGIYVFLFVLLFILSI).

Its subcellular location is the membrane. This is an uncharacterized protein from Acanthamoeba polyphaga (Amoeba).